The following is a 146-amino-acid chain: Large-conductance mechanosensitive channel (146 aa).

The next 2 helical transmembrane spans lie at 12–32 and 88–108; these read AFAMKGNVVDMAVGVIIGGAF and LQATFDFLIIAFSIFLFIKLI.

The protein belongs to the MscL family. As to quaternary structure, homopentamer.

The protein resides in the cell inner membrane. In terms of biological role, channel that opens in response to stretch forces in the membrane lipid bilayer. May participate in the regulation of osmotic pressure changes within the cell. This is Large-conductance mechanosensitive channel from Bacteroides fragilis (strain ATCC 25285 / DSM 2151 / CCUG 4856 / JCM 11019 / LMG 10263 / NCTC 9343 / Onslow / VPI 2553 / EN-2).